The chain runs to 155 residues: S-ribosylhomocysteine lyase (155 aa).

His57, His61, and Cys124 together coordinate Fe cation.

This sequence belongs to the LuxS family. As to quaternary structure, homodimer. Fe cation serves as cofactor.

The catalysed reaction is S-(5-deoxy-D-ribos-5-yl)-L-homocysteine = (S)-4,5-dihydroxypentane-2,3-dione + L-homocysteine. Functionally, involved in the synthesis of autoinducer 2 (AI-2) which is secreted by bacteria and is used to communicate both the cell density and the metabolic potential of the environment. The regulation of gene expression in response to changes in cell density is called quorum sensing. Catalyzes the transformation of S-ribosylhomocysteine (RHC) to homocysteine (HC) and 4,5-dihydroxy-2,3-pentadione (DPD). The sequence is that of S-ribosylhomocysteine lyase from Listeria monocytogenes serovar 1/2a (strain ATCC BAA-679 / EGD-e).